We begin with the raw amino-acid sequence, 276 residues long: ARL14 effector protein (276 aa).

Residues 158 to 177 (KQTEFAPEGGKREKRKLTKA) are disordered. A Glycyl lysine isopeptide (Lys-Gly) (interchain with G-Cter in SUMO2) cross-link involves residue lysine 176. Serine 182 and serine 266 each carry phosphoserine.

In terms of assembly, interacts with ARL14 and MYO1E.

Its subcellular location is the cytoplasm. In terms of biological role, through its interaction with ARL14 and MYO1E, may connect MHC class II-containing cytoplasmic vesicles to the actin network and hence controls the movement of these vesicles along the actin cytoskeleton in dendritic cells. The chain is ARL14 effector protein (Arl14ep) from Mus musculus (Mouse).